A 201-amino-acid polypeptide reads, in one-letter code: 3-isopropylmalate dehydratase small subunit (201 aa).

The protein belongs to the LeuD family. LeuD type 1 subfamily. In terms of assembly, heterodimer of LeuC and LeuD.

The enzyme catalyses (2R,3S)-3-isopropylmalate = (2S)-2-isopropylmalate. Its pathway is amino-acid biosynthesis; L-leucine biosynthesis; L-leucine from 3-methyl-2-oxobutanoate: step 2/4. Its function is as follows. Catalyzes the isomerization between 2-isopropylmalate and 3-isopropylmalate, via the formation of 2-isopropylmaleate. This chain is 3-isopropylmalate dehydratase small subunit, found in Rhodopseudomonas palustris (strain BisA53).